The primary structure comprises 447 residues: Putative short-chain fatty acid transporter (447 aa).

Transmembrane regions (helical) follow at residues 17–37, 49–69, 98–118, 136–156, 188–208, 252–272, 284–304, 321–341, 359–379, 402–422, and 427–447; these read LPDP…CAWG, MWGN…LIVV, VVLV…FGLV, YALL…GFSG, TLFS…LPFI, FLAY…FYKN, IFLI…RAII, AGVQ…EFFI, FINF…PFVI, WMNM…GLGV, and GFCM…LYFL.

It is found in the cell inner membrane. May be responsible for the uptake of short-chain fatty acids. This chain is Putative short-chain fatty acid transporter (atoE), found in Haemophilus influenzae (strain ATCC 51907 / DSM 11121 / KW20 / Rd).